The following is a 289-amino-acid chain: Acetyl-coenzyme A carboxylase carboxyl transferase subunit beta (289 aa).

A CoA carboxyltransferase N-terminal domain is found at 34 to 289 (MWVKCNKCGD…KLINMHQNSF (256 aa)). Zn(2+)-binding residues include Cys38, Cys41, Cys57, and Cys60. The C4-type zinc finger occupies 38–60 (CNKCGDILYQNDLEKNYMVCNLC).

It belongs to the AccD/PCCB family. In terms of assembly, acetyl-CoA carboxylase is a heterohexamer composed of biotin carboxyl carrier protein (AccB), biotin carboxylase (AccC) and two subunits each of ACCase subunit alpha (AccA) and ACCase subunit beta (AccD). The cofactor is Zn(2+).

The protein resides in the cytoplasm. It catalyses the reaction N(6)-carboxybiotinyl-L-lysyl-[protein] + acetyl-CoA = N(6)-biotinyl-L-lysyl-[protein] + malonyl-CoA. Its pathway is lipid metabolism; malonyl-CoA biosynthesis; malonyl-CoA from acetyl-CoA: step 1/1. Functionally, component of the acetyl coenzyme A carboxylase (ACC) complex. Biotin carboxylase (BC) catalyzes the carboxylation of biotin on its carrier protein (BCCP) and then the CO(2) group is transferred by the transcarboxylase to acetyl-CoA to form malonyl-CoA. The polypeptide is Acetyl-coenzyme A carboxylase carboxyl transferase subunit beta (Clostridium botulinum (strain Langeland / NCTC 10281 / Type F)).